The following is a 156-amino-acid chain: SsrA-binding protein (156 aa).

Over residues 135–150 (KRDTIKDREWQRDRSR) the composition is skewed to basic and acidic residues. The disordered stretch occupies residues 135 to 156 (KRDTIKDREWQRDRSRIMKKNT).

Belongs to the SmpB family.

The protein resides in the cytoplasm. Functionally, required for rescue of stalled ribosomes mediated by trans-translation. Binds to transfer-messenger RNA (tmRNA), required for stable association of tmRNA with ribosomes. tmRNA and SmpB together mimic tRNA shape, replacing the anticodon stem-loop with SmpB. tmRNA is encoded by the ssrA gene; the 2 termini fold to resemble tRNA(Ala) and it encodes a 'tag peptide', a short internal open reading frame. During trans-translation Ala-aminoacylated tmRNA acts like a tRNA, entering the A-site of stalled ribosomes, displacing the stalled mRNA. The ribosome then switches to translate the ORF on the tmRNA; the nascent peptide is terminated with the 'tag peptide' encoded by the tmRNA and targeted for degradation. The ribosome is freed to recommence translation, which seems to be the essential function of trans-translation. In Legionella pneumophila (strain Paris), this protein is SsrA-binding protein.